The chain runs to 74 residues: Protein SMIM7 homolog (74 aa).

The helical transmembrane segment at 53–73 (FRAFIGLWNIFIMFLMLVFFG) threads the bilayer.

Belongs to the SMIM7 family.

The protein localises to the membrane. The chain is Protein SMIM7 homolog from Ixodes scapularis (Black-legged tick).